We begin with the raw amino-acid sequence, 154 residues long: Interleukin-2 (154 aa).

The first 20 residues, Met1–Ser20, serve as a signal peptide directing secretion. The O-linked (GalNAc...) threonine glycan is linked to Thr23. Cysteines 78 and 126 form a disulfide.

This sequence belongs to the IL-2 family.

It localises to the secreted. Cytokine produced by activated CD4-positive helper T-cells and to a lesser extend activated CD8-positive T-cells and natural killer (NK) cells that plays pivotal roles in the immune response and tolerance. Binds to a receptor complex composed of either the high-affinity trimeric IL-2R (IL2RA/CD25, IL2RB/CD122 and IL2RG/CD132) or the low-affinity dimeric IL-2R (IL2RB and IL2RG). Interaction with the receptor leads to oligomerization and conformation changes in the IL-2R subunits resulting in downstream signaling starting with phosphorylation of JAK1 and JAK3. In turn, JAK1 and JAK3 phosphorylate the receptor to form a docking site leading to the phosphorylation of several substrates including STAT5. This process leads to activation of several pathways including STAT, phosphoinositide-3-kinase/PI3K and mitogen-activated protein kinase/MAPK pathways. Functions as a T-cell growth factor and can increase NK-cell cytolytic activity as well. Promotes strong proliferation of activated B-cells and subsequently immunoglobulin production. Plays a pivotal role in regulating the adaptive immune system by controlling the survival and proliferation of regulatory T-cells, which are required for the maintenance of immune tolerance. Moreover, participates in the differentiation and homeostasis of effector T-cell subsets, including Th1, Th2, Th17 as well as memory CD8-positive T-cells. The sequence is that of Interleukin-2 (IL2) from Macaca mulatta (Rhesus macaque).